The primary structure comprises 556 residues: Pumilio homolog 11 (556 aa).

A PUM-HD domain is found at 215 to 556 (GGSRELDGSA…RIFSKNLWKK (342 aa)). 8 Pumilio repeats span residues 238-276 (SMVD…IIFK), 277-313 (EVIN…ILIR), 316-351 (SKPG…SLVK), 353-388 (ALVP…FILE), 389-424 (AATK…KLVD), 425-459 (EISR…VLFE), 460-495 (LRGN…VNEL), and 496-531 (VSVL…SLVE).

It localises to the cytoplasm. Functionally, sequence-specific RNA-binding protein that regulates translation and mRNA stability by binding the 3'-UTR of target mRNAs. In Arabidopsis thaliana (Mouse-ear cress), this protein is Pumilio homolog 11 (APUM11).